The primary structure comprises 243 residues: Leucyl/phenylalanyl-tRNA--protein transferase (243 aa).

Belongs to the L/F-transferase family.

Its subcellular location is the cytoplasm. The enzyme catalyses N-terminal L-lysyl-[protein] + L-leucyl-tRNA(Leu) = N-terminal L-leucyl-L-lysyl-[protein] + tRNA(Leu) + H(+). It catalyses the reaction N-terminal L-arginyl-[protein] + L-leucyl-tRNA(Leu) = N-terminal L-leucyl-L-arginyl-[protein] + tRNA(Leu) + H(+). It carries out the reaction L-phenylalanyl-tRNA(Phe) + an N-terminal L-alpha-aminoacyl-[protein] = an N-terminal L-phenylalanyl-L-alpha-aminoacyl-[protein] + tRNA(Phe). Functionally, functions in the N-end rule pathway of protein degradation where it conjugates Leu, Phe and, less efficiently, Met from aminoacyl-tRNAs to the N-termini of proteins containing an N-terminal arginine or lysine. The chain is Leucyl/phenylalanyl-tRNA--protein transferase from Saccharophagus degradans (strain 2-40 / ATCC 43961 / DSM 17024).